The chain runs to 349 residues: Anthranilate phosphoribosyltransferase (349 aa).

Residues Gly82, 85-86 (GD), 92-95 (NVST), 110-118 (KHGNRAVSG), and Ser122 contribute to the 5-phospho-alpha-D-ribose 1-diphosphate site. Gly82 is a binding site for anthranilate. Ser94 contacts Mg(2+). Residue Asn113 participates in anthranilate binding. Residue Arg168 coordinates anthranilate. Mg(2+)-binding residues include Asp227 and Glu228.

Belongs to the anthranilate phosphoribosyltransferase family. In terms of assembly, homodimer. The cofactor is Mg(2+).

The catalysed reaction is N-(5-phospho-beta-D-ribosyl)anthranilate + diphosphate = 5-phospho-alpha-D-ribose 1-diphosphate + anthranilate. It functions in the pathway amino-acid biosynthesis; L-tryptophan biosynthesis; L-tryptophan from chorismate: step 2/5. Functionally, catalyzes the transfer of the phosphoribosyl group of 5-phosphorylribose-1-pyrophosphate (PRPP) to anthranilate to yield N-(5'-phosphoribosyl)-anthranilate (PRA). The chain is Anthranilate phosphoribosyltransferase from Pseudomonas putida (strain ATCC 700007 / DSM 6899 / JCM 31910 / BCRC 17059 / LMG 24140 / F1).